A 103-amino-acid chain; its full sequence is High-potential iron-sulfur protein (103 aa).

The signal sequence occupies residues methionine 1–alanine 28. Positions 66, 69, 82, and 96 each coordinate [4Fe-4S] cluster.

Belongs to the high-potential iron-sulfur protein (HiPIP) family. In terms of assembly, homodimer.

It localises to the periplasm. Specific class of high-redox-potential 4Fe-4S ferredoxins. Functions in anaerobic electron transport in most purple and in some other photosynthetic bacteria and in at least one genus (Paracoccus) of halophilic, denitrifying bacteria. The protein is High-potential iron-sulfur protein (hip) of Ralstonia nicotianae (strain ATCC BAA-1114 / GMI1000) (Ralstonia solanacearum).